A 406-amino-acid polypeptide reads, in one-letter code: MKKKQQHPGGGADPWPHGAPMGGAPPGLGSWKRRVPLLPFLRFSLRDYGFCMATLLVFCLGSLLYQLSGGPPRFLLDLRQYLGNSTYLDDHGPPPSKVLPFPSQVVYNRVGKCGSRTVVLLLRILSEKHGFNLVTSDIHNKTRLTKNEQMELIKNISTAEQPYLFTRHVHFLNFSRFGGDQPVYINIIRDPVNRFLSNYFFRRFGDWRGEQNHMIRTPSMRQEERYLDINECILENYPECSNPRLFYIIPYFCGQHPRCREPGEWALERAKLNVNENFLLVGILEELEDVLLLLERFLPHYFKGVLSIYKDPEHRKLGNMTVTVKKTVPSPEAVQILYQRMRYEYEFYHYVKEQFHLLKRKFGLKSHVSKPPLRPHFFIPTPLETEEPIDDEEQDDEKWLEDIYKR.

At Met-1–Gly-49 the chain is on the cytoplasmic side. A helical; Signal-anchor for type II membrane protein membrane pass occupies residues Phe-50–Gly-70. At Pro-71–Arg-406 the chain is on the lumenal side. Residues Asn-84, Asn-140, and Asn-155 are each glycosylated (N-linked (GlcNAc...) asparagine). The active site involves His-168. 2 N-linked (GlcNAc...) asparagine glycosylation sites follow: Asn-173 and Asn-319. Positions Glu-387 to Trp-399 are enriched in acidic residues. The tract at residues Glu-387–Arg-406 is disordered.

Belongs to the sulfotransferase 3 family. As to expression, widely expressed.

It localises to the golgi apparatus membrane. In terms of biological role, sulfotransferase that catalyzes the transfer of sulfate to the position 2 of uronyl residues in glycosaminoglycan chains. Has mainly activity toward iduronyl residues in dermatan sulfate, and weaker activity toward glucuronyl residues of chondroitin sulfate. Has little to no activity toward desulfated N-resulfated heparin or N-sulfoheparosan. The chain is Uronyl 2-sulfotransferase from Homo sapiens (Human).